A 224-amino-acid chain; its full sequence is Prolactin-2C3 (224 aa).

A signal peptide spans 1-29 (MLPSSIQPCSWILLLLLVNSSLLWKNVAS). N-linked (GlcNAc...) asparagine glycosylation occurs at Asn19. A disulfide bridge connects residues Cys33 and Cys40. N-linked (GlcNAc...) asparagine glycans are attached at residues Asn57, Asn75, and Asn88. 2 disulfides stabilise this stretch: Cys87–Cys199 and Cys216–Cys224.

This sequence belongs to the somatotropin/prolactin family. N-glycosylated and sialylated. Expressed in placenta and hair follicles, with highest expression levels detected in the outer root sheath and no expression detected in bulb. Expressed in placenta, skin wounds, keratinocytes and weakly in embryonic fibroblasts. Expressed in brain, cerebellum and in Neuro-2a cell line. Not detected in liver, kidney, ovary, pituitary gland and brain.

The protein localises to the secreted. It is found in the endoplasmic reticulum. Functionally, may have a role in embryonic development. It is likely to provide a growth stimulus to target cells in maternal and fetal tissues during the development of the embryo at mid-gestation. May play a role during wound healing and in the hair follicle cycle as a growth factor and/or an angiogenesis factor. May play a role in microvilli formation and cell proliferation of neuroblastoma cells. This chain is Prolactin-2C3 (Prl2c3), found in Mus musculus (Mouse).